We begin with the raw amino-acid sequence, 653 residues long: Bifunctional lysine-specific demethylase and histidyl-hydroxylase NO66 (653 aa).

Residues 1–12 (MKKATTSAAAKS) are compositionally biased toward low complexity. Disordered regions lie at residues 1–50 (MKKA…DMLA) and 65–137 (FDDD…LERT). Residues 13 to 26 (QGNSKMQKNANNGT) are compositionally biased toward polar residues. Residue Ser-44 is modified to Phosphoserine. Over residues 72–86 (STSKKTQSGSAAAAK) the composition is skewed to low complexity. Ser-131 is subject to Phosphoserine. The residue at position 137 (Thr-137) is a Phosphothreonine. Phosphoserine is present on Ser-138. Residues 184-208 (AEPTEEGNNNNDEKETETIETHKAD) form a disordered region. Over residues 194–208 (NDEKETETIETHKAD) the composition is skewed to basic and acidic residues. The JmjC domain maps to 300–450 (FYSDGCSIRL…NLLETLMPMV (151 aa)). Residues His-351, Asp-353, and His-416 each contribute to the Fe cation site.

The protein belongs to the ROX family. NO66 subfamily. Fe(2+) is required as a cofactor.

It localises to the nucleus. The enzyme catalyses N(6),N(6)-dimethyl-L-lysyl(36)-[histone H3] + 2 2-oxoglutarate + 2 O2 = L-lysyl(36)-[histone H3] + 2 formaldehyde + 2 succinate + 2 CO2. Oxygenase that can act as both a histone lysine demethylase and a ribosomal histidine hydroxylase. Specifically demethylates 'Lys-4' (H3K4me) and 'Lys-36' (H3K36me) of histone H3, thereby playing a central role in histone code. In Drosophila melanogaster (Fruit fly), this protein is Bifunctional lysine-specific demethylase and histidyl-hydroxylase NO66.